The chain runs to 242 residues: Type III pantothenate kinase (242 aa).

Position 7-14 (7-14 (DLGNSRFK)) interacts with ATP. Substrate-binding positions include Tyr91 and 98-101 (GVDR). Asp100 (proton acceptor) is an active-site residue. Position 121 (Thr121) interacts with ATP. A substrate-binding site is contributed by Thr171.

It belongs to the type III pantothenate kinase family. Homodimer. The cofactor is NH4(+). It depends on K(+) as a cofactor.

The protein localises to the cytoplasm. The enzyme catalyses (R)-pantothenate + ATP = (R)-4'-phosphopantothenate + ADP + H(+). Its pathway is cofactor biosynthesis; coenzyme A biosynthesis; CoA from (R)-pantothenate: step 1/5. Its function is as follows. Catalyzes the phosphorylation of pantothenate (Pan), the first step in CoA biosynthesis. This is Type III pantothenate kinase from Xanthomonas campestris pv. campestris (strain 8004).